We begin with the raw amino-acid sequence, 207 residues long: Large ribosomal subunit protein uL4 (207 aa).

The disordered stretch occupies residues 59–78 (GSGKKPFKQKGTGQARQGCK).

The protein belongs to the universal ribosomal protein uL4 family. In terms of assembly, part of the 50S ribosomal subunit.

In terms of biological role, one of the primary rRNA binding proteins, this protein initially binds near the 5'-end of the 23S rRNA. It is important during the early stages of 50S assembly. It makes multiple contacts with different domains of the 23S rRNA in the assembled 50S subunit and ribosome. Forms part of the polypeptide exit tunnel. This chain is Large ribosomal subunit protein uL4, found in Geotalea daltonii (strain DSM 22248 / JCM 15807 / FRC-32) (Geobacter daltonii).